Reading from the N-terminus, the 683-residue chain is Transforming growth factor-beta-induced protein ig-h3 (683 aa).

A signal peptide spans 1–23 (MALLGRLLPLALALALGPAATHA). Serine 37 is subject to Phosphoserine. An EMI domain is found at 45 to 99 (GPNVCAVQKLIGTNKKYFTNCKQWYQRKICGKSTVISYECCPGYEKVPGEKGCPA). Cystine bridges form between cysteine 49-cysteine 85, cysteine 74-cysteine 339, cysteine 84-cysteine 97, cysteine 214-cysteine 317, and cysteine 473-cysteine 478. Cysteine 65 bears the S-cysteinyl cysteine mark. 4 consecutive FAS1 domains span residues 103–236 (LSNL…DKVI), 240–371 (TNNI…DELL), 375–498 (SAKT…DRML), and 502–632 (MGTV…NTVL). Positions 642-644 (RGD) match the Cell attachment site motif.

Binds to type I, II, and IV collagens. Gamma-carboxyglutamated; gamma-carboxyglutamate residues are formed by vitamin K dependent carboxylation; these residues may be required for binding to calcium. According to a report, does not contain any vitamin K-dependent gamma-carboxyglutamate residues. Post-translationally, the EMI domain contains 2 expected intradomain disulfide bridges (Cys-49-Cys85 and Cys-84-Cys-97) and one unusual interdomain disulfide bridge to the second FAS1 domain (Cys-74-Cys-339). This arrangement violates the predicted disulfide bridge pattern of an EMI domain. In terms of tissue distribution, widely distributed in various tissues except for the brain. High levels in corneal epithelium.

It is found in the secreted. The protein resides in the extracellular space. Its subcellular location is the extracellular matrix. In terms of biological role, plays a role in cell adhesion. May play a role in cell-collagen interactions. The chain is Transforming growth factor-beta-induced protein ig-h3 (TGFBI) from Sus scrofa (Pig).